Reading from the N-terminus, the 315-residue chain is Glutathione synthetase (315 aa).

The 186-residue stretch at Lys-125–Glu-310 folds into the ATP-grasp domain. An ATP-binding site is contributed by Trp-151–Gly-207. Glu-281 and Asn-283 together coordinate Mg(2+).

This sequence belongs to the prokaryotic GSH synthase family. Requires Mg(2+) as cofactor. The cofactor is Mn(2+).

It catalyses the reaction gamma-L-glutamyl-L-cysteine + glycine + ATP = glutathione + ADP + phosphate + H(+). It functions in the pathway sulfur metabolism; glutathione biosynthesis; glutathione from L-cysteine and L-glutamate: step 2/2. This chain is Glutathione synthetase, found in Salmonella typhimurium (strain LT2 / SGSC1412 / ATCC 700720).